Consider the following 172-residue polypeptide: Large ribosomal subunit protein uL10 (172 aa).

This sequence belongs to the universal ribosomal protein uL10 family. Part of the ribosomal stalk of the 50S ribosomal subunit. The N-terminus interacts with L11 and the large rRNA to form the base of the stalk. The C-terminus forms an elongated spine to which L12 dimers bind in a sequential fashion forming a multimeric L10(L12)X complex.

Functionally, forms part of the ribosomal stalk, playing a central role in the interaction of the ribosome with GTP-bound translation factors. The sequence is that of Large ribosomal subunit protein uL10 from Brucella suis biovar 1 (strain 1330).